A 238-amino-acid chain; its full sequence is Sugar fermentation stimulation protein homolog (238 aa).

This sequence belongs to the SfsA family.

The protein is Sugar fermentation stimulation protein homolog of Haemophilus influenzae (strain 86-028NP).